The sequence spans 38 residues: Large ribosomal subunit protein bL36 (38 aa).

This sequence belongs to the bacterial ribosomal protein bL36 family.

This chain is Large ribosomal subunit protein bL36, found in Lactobacillus acidophilus (strain ATCC 700396 / NCK56 / N2 / NCFM).